Here is a 285-residue protein sequence, read N- to C-terminus: MLYMIGLGLGDAKDITVKGLEVVRRCSRVYLETYTSVLTVGKEVLEEFYERKLILADREEVEQEADNILKDADISDVAFLVVGDPFGATTHSDLILRATKLGIPYRVIHNASIMNAVGCCGLQLYKFGETVSIVFWTDTWRPESFFDKVKKNRQNGMHTLCLLDIKVKEQSLENLIKGRKIYEPPRYMSVNQAAQQLLEIVQNQRIRGEEPAVTEETLCVGLARVGAEDQKIAAGTLQQMSTVDLGGPLHSLIITGGSLHPLEMEMLSLFTIPENSSEAQSIGGL.

Residues L9, D84, G87, 112–113 (SI), and L163 contribute to the S-adenosyl-L-methionine site. The residue at position 171 (S171) is a Phosphoserine. Residues V225 and H250 each coordinate S-adenosyl-L-methionine.

It belongs to the diphthine synthase family.

It catalyses the reaction 2-[(3S)-amino-3-carboxypropyl]-L-histidyl-[translation elongation factor 2] + 4 S-adenosyl-L-methionine = diphthine methyl ester-[translation elongation factor 2] + 4 S-adenosyl-L-homocysteine + 3 H(+). It participates in protein modification; peptidyl-diphthamide biosynthesis. Its function is as follows. S-adenosyl-L-methionine-dependent methyltransferase that catalyzes four methylations of the modified target histidine residue in translation elongation factor 2 (EF-2), to form an intermediate called diphthine methyl ester. The four successive methylation reactions represent the second step of diphthamide biosynthesis. This chain is Diphthine methyl ester synthase (DPH5), found in Bos taurus (Bovine).